A 291-amino-acid polypeptide reads, in one-letter code: uncharacterized protein (291 aa).

The HTH lysR-type domain maps to 1 to 58 (MDLKWLQTFIAAAESESFREAAEHLYLTQPAVSQHMRKLEDELDMRLFLHSGRRVVLT). The H-T-H motif DNA-binding region spans 18 to 37 (FREAAEHLYLTQPAVSQHMR).

It belongs to the LysR transcriptional regulatory family.

This is an uncharacterized protein from Bacillus subtilis (strain 168).